A 353-amino-acid polypeptide reads, in one-letter code: Photosystem II D2 protein (353 aa).

At threonine 2 the chain carries N-acetylthreonine. Threonine 2 carries the post-translational modification Phosphothreonine. Residues 41–61 (CAYFAVGGWFTGTTFVTSWYT) traverse the membrane as a helical segment. Residue histidine 118 coordinates chlorophyll a. A helical transmembrane segment spans residues 125–141 (GFMLRQFELARSVQLRP). Pheophytin a is bound by residues glutamine 130 and asparagine 143. The chain crosses the membrane as a helical span at residues 153–166 (VFVSVFLIYPLGQS). Residue histidine 198 coordinates chlorophyll a. Residues 208-228 (AALLCAIHGATVENTLFEDGD) traverse the membrane as a helical segment. Positions 215 and 262 each coordinate a plastoquinone. A Fe cation-binding site is contributed by histidine 215. Histidine 269 contributes to the Fe cation binding site. Residues 279–295 (GLWMSALGVVGLALNLR) traverse the membrane as a helical segment.

It belongs to the reaction center PufL/M/PsbA/D family. PSII is composed of 1 copy each of membrane proteins PsbA, PsbB, PsbC, PsbD, PsbE, PsbF, PsbH, PsbI, PsbJ, PsbK, PsbL, PsbM, PsbT, PsbX, PsbY, PsbZ, Psb30/Ycf12, at least 3 peripheral proteins of the oxygen-evolving complex and a large number of cofactors. It forms dimeric complexes. The D1/D2 heterodimer binds P680, chlorophylls that are the primary electron donor of PSII, and subsequent electron acceptors. It shares a non-heme iron and each subunit binds pheophytin, quinone, additional chlorophylls, carotenoids and lipids. There is also a Cl(-1) ion associated with D1 and D2, which is required for oxygen evolution. The PSII complex binds additional chlorophylls, carotenoids and specific lipids. serves as cofactor.

The protein resides in the plastid. It is found in the chloroplast thylakoid membrane. The enzyme catalyses 2 a plastoquinone + 4 hnu + 2 H2O = 2 a plastoquinol + O2. Photosystem II (PSII) is a light-driven water:plastoquinone oxidoreductase that uses light energy to abstract electrons from H(2)O, generating O(2) and a proton gradient subsequently used for ATP formation. It consists of a core antenna complex that captures photons, and an electron transfer chain that converts photonic excitation into a charge separation. The D1/D2 (PsbA/PsbD) reaction center heterodimer binds P680, the primary electron donor of PSII as well as several subsequent electron acceptors. D2 is needed for assembly of a stable PSII complex. The sequence is that of Photosystem II D2 protein from Cicer arietinum (Chickpea).